The following is a 121-amino-acid chain: Phosphoribosyl-ATP pyrophosphatase (121 aa).

It belongs to the PRA-PH family.

The protein localises to the cytoplasm. It carries out the reaction 1-(5-phospho-beta-D-ribosyl)-ATP + H2O = 1-(5-phospho-beta-D-ribosyl)-5'-AMP + diphosphate + H(+). It functions in the pathway amino-acid biosynthesis; L-histidine biosynthesis; L-histidine from 5-phospho-alpha-D-ribose 1-diphosphate: step 2/9. This is Phosphoribosyl-ATP pyrophosphatase from Nitrosospira multiformis (strain ATCC 25196 / NCIMB 11849 / C 71).